A 327-amino-acid polypeptide reads, in one-letter code: Tetraacyldisaccharide 4'-kinase (327 aa).

Threonine 52–threonine 59 provides a ligand contact to ATP.

It belongs to the LpxK family.

The enzyme catalyses a lipid A disaccharide + ATP = a lipid IVA + ADP + H(+). Its pathway is glycolipid biosynthesis; lipid IV(A) biosynthesis; lipid IV(A) from (3R)-3-hydroxytetradecanoyl-[acyl-carrier-protein] and UDP-N-acetyl-alpha-D-glucosamine: step 6/6. Its function is as follows. Transfers the gamma-phosphate of ATP to the 4'-position of a tetraacyldisaccharide 1-phosphate intermediate (termed DS-1-P) to form tetraacyldisaccharide 1,4'-bis-phosphate (lipid IVA). The protein is Tetraacyldisaccharide 4'-kinase of Methylorubrum populi (strain ATCC BAA-705 / NCIMB 13946 / BJ001) (Methylobacterium populi).